The following is a 507-amino-acid chain: Probable bifunctional methylthioribulose-1-phosphate dehydratase/enolase-phosphatase E1 (507 aa).

At Ala2 the chain carries N-acetylalanine. Residues Ala2–Asp237 form a methylthioribulose-1-phosphate dehydratase region. Cys109 provides a ligand contact to substrate. Residues His127 and His129 each contribute to the Zn(2+) site. The active-site Proton donor/acceptor is Glu152. Position 202 (His202) interacts with Zn(2+). Residues Ile268 to Ile507 form an enolase-phosphatase E1 region. Residues Asp271 and Glu273 each contribute to the Mg(2+) site. Substrate-binding positions include Ser406–Ser407 and Lys440. Asp466 provides a ligand contact to Mg(2+).

This sequence in the N-terminal section; belongs to the aldolase class II family. MtnB subfamily. The protein in the C-terminal section; belongs to the HAD-like hydrolase superfamily. MasA/MtnC family. Requires Zn(2+) as cofactor. It depends on Mg(2+) as a cofactor.

The enzyme catalyses 5-(methylsulfanyl)-D-ribulose 1-phosphate = 5-methylsulfanyl-2,3-dioxopentyl phosphate + H2O. It catalyses the reaction 5-methylsulfanyl-2,3-dioxopentyl phosphate + H2O = 1,2-dihydroxy-5-(methylsulfanyl)pent-1-en-3-one + phosphate. Its pathway is amino-acid biosynthesis; L-methionine biosynthesis via salvage pathway; L-methionine from S-methyl-5-thio-alpha-D-ribose 1-phosphate: step 2/6. It functions in the pathway amino-acid biosynthesis; L-methionine biosynthesis via salvage pathway; L-methionine from S-methyl-5-thio-alpha-D-ribose 1-phosphate: step 3/6. The protein operates within amino-acid biosynthesis; L-methionine biosynthesis via salvage pathway; L-methionine from S-methyl-5-thio-alpha-D-ribose 1-phosphate: step 4/6. This is Probable bifunctional methylthioribulose-1-phosphate dehydratase/enolase-phosphatase E1 from Arabidopsis thaliana (Mouse-ear cress).